The following is a 144-amino-acid chain: Kunitz-type elastase inhibitor BrEI (144 aa).

The N-linked (GlcNAc...) asparagine glycan is linked to Asn-38. Cys-41 and Cys-88 are oxidised to a cystine.

This sequence belongs to the leguminous Kunitz-type inhibitor family.

In terms of biological role, inhibitor of porcine pancreatic elastase with a Ki of 27 nM. Does not inhibit human neutrophil elastase, bovine trypsin, human plasma kallikrein or porcine pancreatic kallikrein. The polypeptide is Kunitz-type elastase inhibitor BrEI (Bauhinia rufa (Orchid tree)).